The chain runs to 819 residues: Transferrin 2 (819 aa).

Positions 1-21 (MASSLVFVALVGALCFTLANA) are cleaved as a signal peptide. Residues 33–373 (MVWCTKSQAE…QYDQYRSERL (341 aa)) enclose the Transferrin-like 1 domain. 2 disulfide bridges follow: Cys-36–Cys-78 and Cys-46–Cys-69. 2 N-linked (GlcNAc...) asparagine glycosylation sites follow: Asn-48 and Asn-66. Positions 93 and 121 each coordinate Fe(3+). Cystine bridges form between Cys-147/Cys-237, Cys-190/Cys-213, and Cys-273/Cys-287. Hydrogencarbonate is bound by residues Ala-155 and Gly-156. The N-linked (GlcNAc...) asparagine glycan is linked to Asn-187. Fe(3+) is bound at residue Tyr-231. The segment at 325 to 361 (GTRDDQSRQGGQSFNSRNNINDQNAYGQFDNNDPYRT) is disordered. The span at 332–361 (RQGGQSFNSRNNINDQNAYGQFDNNDPYRT) shows a compositional bias: polar residues. Asn-388 is a glycosylation site (N-linked (GlcNAc...) asparagine). Positions 450 to 796 (MTLCVTSENE…FMRARRITDC (347 aa)) constitute a Transferrin-like 2 domain. 2 cysteine pairs are disulfide-bonded: Cys-453–Cys-490 and Cys-463–Cys-481. Residues Asp-505 and Tyr-533 each coordinate Fe(3+). 4 disulfide bridges follow: Cys-557–Cys-646, Cys-599–Cys-621, Cys-618–Cys-629, and Cys-687–Cys-701. The hydrogencarbonate site is built by Thr-559, Ala-565, and Gly-566. An N-linked (GlcNAc...) asparagine glycan is attached at Asn-720. Cys-796 is lipidated: GPI-anchor amidated cysteine. A propeptide spans 797 to 819 (YAGASQLALSVGLLLVGSLVAML) (removed in mature form).

Belongs to the transferrin family. Forms a complex composed of septa junction proteins Nrx-IV/Nrx, Tsf2/MTf, Cont and Nrg during late embryogenesis.

It localises to the apicolateral cell membrane. Its subcellular location is the cell junction. The protein localises to the septate junction. Functionally, iron-binding protein and component of septate junctions that form the paracellular permeability barrier in epithelial tissues. In an iron-dependent manner, required for septate junction assembly during epithelial maturation in embryos and mature septa junctions stability. This is Transferrin 2 from Drosophila melanogaster (Fruit fly).